We begin with the raw amino-acid sequence, 185 residues long: Elongation factor P (185 aa).

This sequence belongs to the elongation factor P family.

It is found in the cytoplasm. It participates in protein biosynthesis; polypeptide chain elongation. Involved in peptide bond synthesis. Stimulates efficient translation and peptide-bond synthesis on native or reconstituted 70S ribosomes in vitro. Probably functions indirectly by altering the affinity of the ribosome for aminoacyl-tRNA, thus increasing their reactivity as acceptors for peptidyl transferase. The protein is Elongation factor P of Staphylococcus carnosus (strain TM300).